We begin with the raw amino-acid sequence, 179 residues long: GTP-dependent dephospho-CoA kinase (179 aa).

The GTP site is built by D49, V50, V51, D68, K70, and E126.

Belongs to the GTP-dependent DPCK family.

It catalyses the reaction 3'-dephospho-CoA + GTP = GDP + CoA + H(+). It functions in the pathway cofactor biosynthesis; coenzyme A biosynthesis. Its function is as follows. Catalyzes the GTP-dependent phosphorylation of the 3'-hydroxyl group of dephosphocoenzyme A to form coenzyme A (CoA). The sequence is that of GTP-dependent dephospho-CoA kinase from Pyrococcus abyssi (strain GE5 / Orsay).